Here is a 275-residue protein sequence, read N- to C-terminus: Large ribosomal subunit protein uL2 (275 aa).

The interval 223 to 275 (VAMNPVDHPHGGGEGRTSGGRHPVSPWGQPTKGYKTRSNKRTDKYIVRRRNKK) is disordered.

Belongs to the universal ribosomal protein uL2 family. As to quaternary structure, part of the 50S ribosomal subunit. Forms a bridge to the 30S subunit in the 70S ribosome.

Functionally, one of the primary rRNA binding proteins. Required for association of the 30S and 50S subunits to form the 70S ribosome, for tRNA binding and peptide bond formation. It has been suggested to have peptidyltransferase activity; this is somewhat controversial. Makes several contacts with the 16S rRNA in the 70S ribosome. The protein is Large ribosomal subunit protein uL2 of Shewanella pealeana (strain ATCC 700345 / ANG-SQ1).